The primary structure comprises 67 residues: Small, acid-soluble spore protein B (67 aa).

It belongs to the alpha/beta-type SASP family.

Its function is as follows. SASP are bound to spore DNA. They are double-stranded DNA-binding proteins that cause DNA to change to an a-like conformation. They protect the DNA backbone from chemical and enzymatic cleavage and are thus involved in dormant spore's high resistance to UV light. In Bacillus subtilis (strain 168), this protein is Small, acid-soluble spore protein B (sspB).